A 98-amino-acid polypeptide reads, in one-letter code: UPF0251 protein SO_0727 (98 aa).

It belongs to the UPF0251 family.

The chain is UPF0251 protein SO_0727 from Shewanella oneidensis (strain ATCC 700550 / JCM 31522 / CIP 106686 / LMG 19005 / NCIMB 14063 / MR-1).